We begin with the raw amino-acid sequence, 906 residues long: Catenin alpha-1 (906 aa).

The residue at position 2 (Thr2) is an N-acetylthreonine. Residues 2 to 228 (TAVHAGNINF…PILYTASQAC (227 aa)) are involved in homodimerization. Lys57 is covalently cross-linked (Glycyl lysine isopeptide (Lys-Gly) (interchain with G-Cter in SUMO2)). Positions 97–148 (VRKQGDLMKAAAGEFADDPCSSVKRGNMVRAARALLSAVTRLLILADMADVY) are interaction with JUP and CTNNB1. Residues Ser264, Ser268, Ser295, and Ser297 each carry the phosphoserine modification. The segment at 325–394 (TRDDRRERIV…AVMDHVSDSF (70 aa)) is interaction with alpha-actinin. Thr634 bears the Phosphothreonine mark. Ser641 is modified (phosphoserine; by CK2). Position 645 is a phosphothreonine (Thr645). A phosphoserine; by CK1 mark is found at Ser652 and Ser655. Phosphothreonine; by CK1 is present on Thr658. Lys797 is covalently cross-linked (Glycyl lysine isopeptide (Lys-Gly) (interchain with G-Cter in SUMO2)). At Ser851 the chain carries Phosphoserine. Over residues 864-880 (PEKKPLVKREKQDETQT) the composition is skewed to basic and acidic residues. Positions 864-894 (PEKKPLVKREKQDETQTKIKRASQKKHVNPV) are disordered. A compositionally biased stretch (basic residues) spans 881-891 (KIKRASQKKHV).

The protein belongs to the vinculin/alpha-catenin family. As to quaternary structure, monomer and homodimer; the monomer preferentially binds to CTNNB1 and the homodimer to actin. Component of an cadherin:catenin adhesion complex composed of at least of CDH26, beta-catenin/CTNNB1, alpha-catenin/CTNNA1 and p120 catenin/CTNND1. Possible component of an E-cadherin/ catenin adhesion complex together with E-cadherin/CDH1 and beta-catenin/CTNNB1 or gamma-catenin/JUP; the complex is located to adherens junctions. The stable association of CTNNA1 is controversial as CTNNA1 was shown not to bind to F-actin when assembled in the complex. Alternatively, the CTNNA1-containing complex may be linked to F-actin by other proteins such as LIMA1. Binds AFDN and F-actin. Interacts with ARHGAP21. Interacts with AJUBA. Interacts with LIMA1. Interacts with vinculin/VCL. Interacts with TJP2/ZO2 (via N-terminus). Interacts with TJP1/ZO1 (via N-terminus). In terms of processing, sumoylated. Phosphorylation seems to contribute to the strength of cell-cell adhesion rather than to the basic capacity for cell-cell adhesion. In terms of tissue distribution, ubiquitously expressed in normal tissues. As to expression, abundantly expressed in brain and cerebellum, also expressed in the placenta, liver, lung, colon, heart, pancreas, stomach and thymus.

It is found in the cytoplasm. It localises to the cytoskeleton. The protein resides in the cell junction. The protein localises to the adherens junction. Its subcellular location is the cell membrane. It is found in the nucleus. Functionally, associates with the cytoplasmic domain of a variety of cadherins. The association of catenins to cadherins produces a complex which is linked to the actin filament network, and which seems to be of primary importance for cadherins cell-adhesion properties. Can associate with both E- and N-cadherins. Originally believed to be a stable component of E-cadherin/catenin adhesion complexes and to mediate the linkage of cadherins to the actin cytoskeleton at adherens junctions. In contrast, cortical actin was found to be much more dynamic than E-cadherin/catenin complexes and CTNNA1 was shown not to bind to F-actin when assembled in the complex suggesting a different linkage between actin and adherens junctions components. The homodimeric form may regulate actin filament assembly and inhibit actin branching by competing with the Arp2/3 complex for binding to actin filaments. Involved in the regulation of WWTR1/TAZ, YAP1 and TGFB1-dependent SMAD2 and SMAD3 nuclear accumulation. May play a crucial role in cell differentiation. The polypeptide is Catenin alpha-1 (Homo sapiens (Human)).